Consider the following 380-residue polypeptide: Cytochrome b (380 aa).

4 helical membrane-spanning segments follow: residues 33–53 (FGSL…FLAM), 77–98 (WLIR…YMHI), 113–133 (WNIG…GYVL), and 178–198 (FFAF…LHLL). The heme b site is built by His-83 and His-97. Heme b contacts are provided by His-182 and His-196. Residue His-201 coordinates a ubiquinone. 4 helical membrane-spanning segments follow: residues 226 to 246 (YKDL…ALFA), 288 to 308 (LGGV…PILH), 320 to 340 (LTQF…WIGG), and 347 to 367 (FIII…VLAP).

The protein belongs to the cytochrome b family. The cytochrome bc1 complex contains 3 respiratory subunits (MT-CYB, CYC1 and UQCRFS1), 2 core proteins (UQCRC1 and UQCRC2) and probably 6 low-molecular weight proteins. Heme b is required as a cofactor.

The protein resides in the mitochondrion inner membrane. In terms of biological role, component of the ubiquinol-cytochrome c reductase complex (complex III or cytochrome b-c1 complex) that is part of the mitochondrial respiratory chain. The b-c1 complex mediates electron transfer from ubiquinol to cytochrome c. Contributes to the generation of a proton gradient across the mitochondrial membrane that is then used for ATP synthesis. The polypeptide is Cytochrome b (mt-cyb) (Salmo trutta (Brown trout)).